The sequence spans 202 residues: Large ribosomal subunit protein bL25 (202 aa).

The protein belongs to the bacterial ribosomal protein bL25 family. CTC subfamily. In terms of assembly, part of the 50S ribosomal subunit; part of the 5S rRNA/L5/L18/L25 subcomplex. Contacts the 5S rRNA. Binds to the 5S rRNA independently of L5 and L18.

Its function is as follows. This is one of the proteins that binds to the 5S RNA in the ribosome where it forms part of the central protuberance. The polypeptide is Large ribosomal subunit protein bL25 (Burkholderia ambifaria (strain MC40-6)).